A 132-amino-acid polypeptide reads, in one-letter code: Small ribosomal subunit protein uS8 (132 aa).

The protein belongs to the universal ribosomal protein uS8 family. As to quaternary structure, part of the 30S ribosomal subunit. Contacts proteins S5 and S12.

In terms of biological role, one of the primary rRNA binding proteins, it binds directly to 16S rRNA central domain where it helps coordinate assembly of the platform of the 30S subunit. The polypeptide is Small ribosomal subunit protein uS8 (Mycobacterium sp. (strain KMS)).